A 229-amino-acid chain; its full sequence is Uracil-DNA glycosylase (229 aa).

Asp-65 (proton acceptor) is an active-site residue.

This sequence belongs to the uracil-DNA glycosylase (UDG) superfamily. UNG family.

Its subcellular location is the cytoplasm. It carries out the reaction Hydrolyzes single-stranded DNA or mismatched double-stranded DNA and polynucleotides, releasing free uracil.. Functionally, excises uracil residues from the DNA which can arise as a result of misincorporation of dUMP residues by DNA polymerase or due to deamination of cytosine. This is Uracil-DNA glycosylase from Latilactobacillus sakei subsp. sakei (strain 23K) (Lactobacillus sakei subsp. sakei).